The sequence spans 196 residues: Homeobox protein ANF-1 (196 aa).

The homeobox DNA-binding region spans 119-178 (GRRPRTAFTRNQIEVLENVFKMNSYPGIDIREELARKLDLEEDRIQIWFQNRRAKLKRSH).

It belongs to the ANF homeobox family.

The protein resides in the nucleus. In terms of biological role, may be involved in the early patterning of the most anterior region of the main embryonic body axis. This is Homeobox protein ANF-1 from Gallus gallus (Chicken).